Here is a 968-residue protein sequence, read N- to C-terminus: Alanine--tRNA ligase, cytoplasmic (968 aa).

An N-acetylmethionine modification is found at methionine 1. Phosphoserine is present on residues serine 3 and serine 8. Residue lysine 19 is modified to N6-acetyllysine. ATP-binding positions include arginine 77, histidine 95, tryptophan 176, and 214–216; that span reads IWN. L-alanine contacts are provided by asparagine 216 and aspartate 239. Glycine 243 is an ATP binding site. Serine 399 and serine 555 each carry phosphoserine. Zn(2+)-binding residues include histidine 605, histidine 609, cysteine 723, and histidine 727. Positions 750 to 763 match the Nuclear localization signal motif; sequence RRIVAVTGAEAQKA. At lysine 876 the chain carries N6-acetyllysine. Lysine 943 carries the post-translational modification N6,N6,N6-trimethyllysine; alternate. At lysine 943 the chain carries N6,N6-dimethyllysine; alternate. The residue at position 943 (lysine 943) is an N6-methyllysine; alternate.

Belongs to the class-II aminoacyl-tRNA synthetase family. As to quaternary structure, monomer. Interacts with ANKRD16; the interaction is direct. The cofactor is Zn(2+). Post-translationally, ISGylated. In terms of processing, methylation at 'Lys-943' by METTL21C.

The protein localises to the cytoplasm. It localises to the nucleus. It carries out the reaction tRNA(Ala) + L-alanine + ATP = L-alanyl-tRNA(Ala) + AMP + diphosphate. The enzyme catalyses (S)-lactate + ATP + H(+) = (S)-lactoyl-AMP + diphosphate. It catalyses the reaction (S)-lactoyl-AMP + L-lysyl-[protein] = N(6)-[(S)-lactoyl]-L-lysyl-[protein] + AMP + 2 H(+). With respect to regulation, the protein lactyltransferase activity is inhibited by beta-alanine. Catalyzes the attachment of alanine to tRNA(Ala) in a two-step reaction: alanine is first activated by ATP to form Ala-AMP and then transferred to the acceptor end of tRNA(Ala). Also edits incorrectly charged tRNA(Ala) via its editing domain. In presence of high levels of lactate, also acts as a protein lactyltransferase that mediates lactylation of lysine residues in target proteins, such as TEAD1, TP53/p53 and YAP1. Protein lactylation takes place in a two-step reaction: lactate is first activated by ATP to form lactate-AMP and then transferred to lysine residues of target proteins. Acts as an inhibitor of TP53/p53 activity by catalyzing lactylation of TP53/p53. Acts as a positive regulator of the Hippo pathway by mediating lactylation of TEAD1 and YAP1. The chain is Alanine--tRNA ligase, cytoplasmic (AARS1) from Pongo abelii (Sumatran orangutan).